A 240-amino-acid polypeptide reads, in one-letter code: MAQISKYKRVVLKLSGEALAGEKGFGINPVIIKSVAEQVAEVAKMDCEIAVIVGGGNIWRGKTGSDLGMDRGTADYMGMLATVMNALALQDSLEQLDCDTRVLTSIEMKQVAEPYIRRRAIRHLEKKRVVIFAAGIGNPYFSTDTTAALRAAEVEADVILMGKNNVDGVYSADPKVNKDAVKYEHLTHIQMLQEGLQVMDSTASSFCMDNNIPLTVFSIMEEGNIKRAVMGEKIGTLITK.

An ATP-binding site is contributed by 13 to 16 (KLSG). The tract at residues 21–26 (GEKGFG) is involved in allosteric activation by GTP. A UMP-binding site is contributed by Gly-55. ATP is bound by residues Gly-56 and Arg-60. UMP-binding positions include Asp-75 and 136–143 (IGNPYFST). ATP is bound by residues Asn-164, Tyr-170, and Asp-173.

Belongs to the UMP kinase family. Homohexamer.

The protein resides in the cytoplasm. The catalysed reaction is UMP + ATP = UDP + ADP. Its pathway is pyrimidine metabolism; CTP biosynthesis via de novo pathway; UDP from UMP (UMPK route): step 1/1. With respect to regulation, allosterically activated by GTP. Inhibited by UTP. Its function is as follows. Catalyzes the reversible phosphorylation of UMP to UDP. The polypeptide is Uridylate kinase (Staphylococcus aureus (strain USA300)).